Here is a 4042-residue protein sequence, read N- to C-terminus: Polyketide synthase-nonribosomal peptide synthetase phmA (4042 aa).

The 402-residue stretch at 10–411 folds into the Ketosynthase family 3 (KS3) domain; that stretch reads NEPIAIVGSA…GANAHAILEA (402 aa). Residues 519–837 form an acyl transferase region; sequence VFTGQGAQWA…TGLLSRDRDD (319 aa). The interval 909 to 1042 is N-terminal hotdog fold; the sequence is HELLGTKCPD…GRISALFGPP (134 aa). Residues 909 to 1208 are dehydratase (DH) domain; that stretch reads HELLGTKCPD…LHTKPLGHAT (300 aa). Residues 909–1210 enclose the PKS/mFAS DH domain; that stretch reads HELLGTKCPD…TKPLGHATPE (302 aa). The active-site Proton acceptor; for dehydratase activity is histidine 941. Residues 1057-1210 are C-terminal hotdog fold; sequence MIDVDPEQFY…TKPLGHATPE (154 aa). Aspartate 1117 functions as the Proton donor; for dehydratase activity in the catalytic mechanism. A methyltransferase (MT) domain region spans residues 1349–1572; it reads DDMLNDFYVK…VDEHVEFIRN (224 aa). Residues 2073 to 2246 form a ketoreductase (KR)domain region; that stretch reads TYWLVGLTGG…AGSVINIGAI (174 aa). The 83-residue stretch at 2351 to 2433 folds into the Carrier 1 domain; it reads ATTADEVNEA…ELVSAAQEQL (83 aa). Position 2393 is an O-(pantetheine 4'-phosphoryl)serine (serine 2393). 2 disordered regions span residues 2460–2504 and 2535–2554; these read KTET…SKDA and ATRS…PEND. Acidic residues predominate over residues 2479 to 2490; sequence EVDEEEQEEDEA. The span at 2495 to 2504 shows a compositional bias: polar residues; the sequence is NFFSSASKDA. Positions 2536-2549 are enriched in low complexity; sequence TRSKTSSSSSSFTS. Residues 2584–3019 form a condensation region; it reads RVSPMSFGQA…LGRPPLYDPQ (436 aa). Residues 3047 to 3443 are adenylation; sequence EMASRFGSQI…TADGLVLEGR (397 aa). Positions 3562–3642 constitute a Carrier 2 domain; it reads KENKSPESEL…AMLNLISPAS (81 aa). O-(pantetheine 4'-phosphoryl)serine is present on serine 3602. The reductase-like stretch occupies residues 3703 to 3924; it reads ITGASGFLGK…DFVSVESVAH (222 aa).

The protein belongs to the NRP synthetase family.

Its pathway is mycotoxin biosynthesis. Hybrid PKS-NRPS synthetase; part of the gene cluster that mediates the biosynthesis of the mycotoxins phomacins, leucine-derived cytochalasans with potent actin polymerization-inhibitory activities and monocot-specific antigerminative activities. The first step in the pathway is catalyzed by the hybrid PKS-NRPS phmA, assisted by the enoyl reductase phmE, that are responsible for fusion of the leucine precursor and the polyketide backbone to produce a 2-pyrrolidone intermediate. The polyketide synthase module (PKS) of phmA is responsible for the synthesis of the polyketide backbone and the downstream nonribosomal peptide synthetase (NRPS) amidates the carboxyl end of the polyketide with the leucine precursor. Because phmA lacks a designated enoylreductase (ER) domain, the required activity is provided the enoyl reductase phmE. Reduction by the hydrolyase phmG, followed by dehydration and intra-molecular Diels-Alder cyclization by the Diels-Alderase phmD then yield the required isoindolone-fused macrocycle. A number of oxidative steps catalyzed by the tailoring cytochrome P450 monooxygenase phmB, the FAD-linked oxidoreductase phmC and the short-chain dehydrogenase/reductase phmF, are further required to afford the final products, phomacin D and phomacin E. This chain is Polyketide synthase-nonribosomal peptide synthetase phmA, found in Phaeosphaeria nodorum (strain SN15 / ATCC MYA-4574 / FGSC 10173) (Glume blotch fungus).